The chain runs to 32 residues: Ferredoxin (32 aa).

Residues 3–32 (YKVRLLSEAEGIDVTIDCADDVYILDAAEE) enclose the 2Fe-2S ferredoxin-type domain.

The protein belongs to the 2Fe2S plant-type ferredoxin family. The cofactor is [2Fe-2S] cluster.

It is found in the plastid. The protein localises to the chloroplast. Functionally, ferredoxins are iron-sulfur proteins that transfer electrons in a wide variety of metabolic reactions. The polypeptide is Ferredoxin (Porphyridium purpureum (Red alga)).